The sequence spans 465 residues: Cysteine--tRNA ligase (465 aa).

Cys-30 is a binding site for Zn(2+). The 'HIGH' region motif lies at 32–42 (ITVYDYCHIGH). 3 residues coordinate Zn(2+): Cys-214, His-239, and Glu-243. The 'KMSKS' region motif lies at 271 to 275 (KMSKS). Lys-274 is an ATP binding site.

Belongs to the class-I aminoacyl-tRNA synthetase family. In terms of assembly, monomer. The cofactor is Zn(2+).

The protein resides in the cytoplasm. It carries out the reaction tRNA(Cys) + L-cysteine + ATP = L-cysteinyl-tRNA(Cys) + AMP + diphosphate. The sequence is that of Cysteine--tRNA ligase from Burkholderia thailandensis (strain ATCC 700388 / DSM 13276 / CCUG 48851 / CIP 106301 / E264).